The following is a 988-amino-acid chain: Junction-mediating and -regulatory protein (988 aa).

Residues 1 to 126 (MSFALEETLE…RSTRSLLGDP (126 aa)) are interaction with p300/EP300. Residues 51–178 (AQRQRSGSRE…RPAPREAQVS (128 aa)) form a disordered region. A phosphoserine mark is found at Ser-115 and Ser-121. A compositionally biased stretch (low complexity) spans 160 to 175 (AAGAAAAAARPAPREA). Coiled-coil stretches lie at residues 324-360 (SELR…ELLD), 489-541 (LQMM…YEVQ), and 590-621 (ASAY…AKKS). The tract at residues 478-567 (EKLQYAVSKE…SIKRLISEKR (90 aa)) is interaction with p300/EP300. Phosphoserine is present on Ser-713. A compositionally biased stretch (basic and acidic residues) spans 731–742 (EEKTEEVGEGRV). Disordered stretches follow at residues 731-755 (EEKT…PQSL) and 800-865 (INPL…LFDS). Positions 746-755 (PSQTTEPQSL) are enriched in polar residues. Over residues 803 to 827 (LPSPLPPTPPPPPPPPPPPPPPPLP) the composition is skewed to pro residues. Over residues 832–851 (SGPETLEKDLPRKEGNEKRI) the composition is skewed to basic and acidic residues. A Phosphoserine modification is found at Ser-888. The region spanning 921–938 (DSNNILAQIRKGVKLKKV) is the WH2 domain. The segment at 967-988 (IKEASPESEDEEEALPCTDWEN) is disordered. The span at 972 to 988 (PESEDEEEALPCTDWEN) shows a compositional bias: acidic residues. Ser-974 carries the phosphoserine modification.

The protein belongs to the JMY family. Interacts with p300/EP300, the complex activates p53/TP53 transcriptional activity. Interacts with TTC5; the interaction facilitates the association between JMY and p300/EP300. Interacts with MAP1LC3B; the interaction results in the activation of JYM's nucleation activity in the cytoplasm. Interacts with TTC5/STRAP; the interaction results in the inhibition of JYM's nucleation activity in the cytoplasm due to competition with MAP1LC3B binding. Post-translationally, ubiquitinated by MDM2, leading to its subsequent degradation by the proteasome. In case of DNA damage, the interaction with MDM2 is altered, preventing degradation and allowing interaction with p300/EP300 and its function in p53/TP53 stress response.

The protein resides in the nucleus. It localises to the cytoplasmic vesicle. Its subcellular location is the cytoplasm. The protein localises to the cytoskeleton. It is found in the endomembrane system. The protein resides in the autophagosome membrane. Functionally, acts both as a nuclear p53/TP53-cofactor and a cytoplasmic regulator of actin dynamics depending on conditions. In nucleus, acts as a cofactor that increases p53/TP53 response via its interaction with p300/EP300. Increases p53/TP53-dependent transcription and apoptosis, suggesting an important role in p53/TP53 stress response such as DNA damage. In cytoplasm, acts as a nucleation-promoting factor for both branched and unbranched actin filaments. Activates the Arp2/3 complex to induce branched actin filament networks. Also catalyzes actin polymerization in the absence of Arp2/3, creating unbranched filaments. Contributes to cell motility by controlling actin dynamics. May promote the rapid formation of a branched actin network by first nucleating new mother filaments and then activating Arp2/3 to branch off these filaments. Upon nutrient stress, directly recruited by MAP1LC3B to the phagophore membrane surfaces to promote actin assembly during autophagy. The p53/TP53-cofactor and actin activator activities are regulated via its subcellular location. This Homo sapiens (Human) protein is Junction-mediating and -regulatory protein (JMY).